The sequence spans 399 residues: MDLVSTSTSPFSCRICNQKAHGNHFGVLTCRACASFFRRAAFSKWSQLKCQKGGCSRNFCKRCRLKKCREMGMDTTKFQYNRDSFRATGQFQLPPPRSLASFVGRPELFLFCDTEAPNAKMLIDVRYLLEEAGRIINQGYETPASGKNQLENLTEGFKYIKVDMNNISSSKYASKDAIISMWEYYFFTVTRWLMYFEGFQKLNSHTQITLIQSVWNVWSRLHKYVATVDYHKANPDTLPTNVVIHNTLVDIENVEFDSTWLSDYPVEHVRRYLSVQHCREFDILGTLRKLNPSELEITYLFAQICFEHAGKRNQGDIMKVTEQFLDSLANDLHDYYVNEMNNSRYFLRLTQLLKINQAIQFSDISPQKQIRNNIIKKEAEKLEKLQKSQFSIKRLSISN.

Residues 10 to 80 (PFSCRICNQK…MGMDTTKFQY (71 aa)) constitute a DNA-binding region (nuclear receptor). 2 consecutive NR C4-type zinc fingers follow at residues 13 to 33 (CRIC…CRAC) and 50 to 63 (CQKG…CKRC). Residues 149 to 392 (QLENLTEGFK…EKLQKSQFSI (244 aa)) form the NR LBD domain.

Belongs to the nuclear hormone receptor family.

The protein localises to the nucleus. Its function is as follows. Orphan nuclear receptor. This is Nuclear hormone receptor family member nhr-125 (nhr-125) from Caenorhabditis elegans.